Here is a 180-residue protein sequence, read N- to C-terminus: MFDIGWSELLVIGVVALIAIGPKELPGVLRTVGQWMGKARRMAAEFQGQFNEAMREAEMADLKKSFDEVRDATSGLTRGDLMTRLTDSLGEPPRLEDIDKPATGADKPSVSSDAASASGSAAPEAGAAETFTADAGTNASGPLAITPQAHQDATAVEPPEGAPEISREGRDQTARGAKAS.

Residues 1 to 21 traverse the membrane as a helical segment; the sequence is MFDIGWSELLVIGVVALIAIG. A disordered region spans residues 77 to 180; it reads TRGDLMTRLT…DQTARGAKAS (104 aa). Positions 105 to 129 are enriched in low complexity; the sequence is ADKPSVSSDAASASGSAAPEAGAAE.

The protein belongs to the TatB family. As to quaternary structure, the Tat system comprises two distinct complexes: a TatABC complex, containing multiple copies of TatA, TatB and TatC subunits, and a separate TatA complex, containing only TatA subunits. Substrates initially bind to the TatABC complex, which probably triggers association of the separate TatA complex to form the active translocon.

The protein resides in the cell inner membrane. Part of the twin-arginine translocation (Tat) system that transports large folded proteins containing a characteristic twin-arginine motif in their signal peptide across membranes. Together with TatC, TatB is part of a receptor directly interacting with Tat signal peptides. TatB may form an oligomeric binding site that transiently accommodates folded Tat precursor proteins before their translocation. This Nitrobacter winogradskyi (strain ATCC 25391 / DSM 10237 / CIP 104748 / NCIMB 11846 / Nb-255) protein is Sec-independent protein translocase protein TatB.